A 226-amino-acid chain; its full sequence is 7-cyano-7-deazaguanine synthase (226 aa).

10 to 20 is an ATP binding site; sequence LSGGLDSATAA. C191, C199, C202, and C205 together coordinate Zn(2+).

The protein belongs to the QueC family. The cofactor is Zn(2+).

It carries out the reaction 7-carboxy-7-deazaguanine + NH4(+) + ATP = 7-cyano-7-deazaguanine + ADP + phosphate + H2O + H(+). Its pathway is purine metabolism; 7-cyano-7-deazaguanine biosynthesis. Its function is as follows. Catalyzes the ATP-dependent conversion of 7-carboxy-7-deazaguanine (CDG) to 7-cyano-7-deazaguanine (preQ(0)). The polypeptide is 7-cyano-7-deazaguanine synthase (Prochlorococcus marinus (strain MIT 9303)).